We begin with the raw amino-acid sequence, 234 residues long: UPF0173 metal-dependent hydrolase Msp_0516 (234 aa).

Belongs to the UPF0173 family.

This is UPF0173 metal-dependent hydrolase Msp_0516 from Methanosphaera stadtmanae (strain ATCC 43021 / DSM 3091 / JCM 11832 / MCB-3).